A 171-amino-acid chain; its full sequence is MPLLDSFAVDHTRMQAPAVRVAKTMNTPHGDAITVFDLRFCIPNKEVMPEKGIHTLEHLFAGFMRDHLNGNGVEIIDISPMGCRTGFYMSLIGTPDEQRVADAWKAAMADVLKVQDQNQIPELNVYQCGTYQMHSLSEAQDIARHILERDVRVNSNKELALPKEKLQELHI.

Residues His-54, His-58, and Cys-128 each contribute to the Fe cation site.

It belongs to the LuxS family. Homodimer. Fe cation is required as a cofactor.

It catalyses the reaction S-(5-deoxy-D-ribos-5-yl)-L-homocysteine = (S)-4,5-dihydroxypentane-2,3-dione + L-homocysteine. Its function is as follows. Involved in the synthesis of autoinducer 2 (AI-2) which is secreted by bacteria and is used to communicate both the cell density and the metabolic potential of the environment. The regulation of gene expression in response to changes in cell density is called quorum sensing. Catalyzes the transformation of S-ribosylhomocysteine (RHC) to homocysteine (HC) and 4,5-dihydroxy-2,3-pentadione (DPD). In Salmonella agona (strain SL483), this protein is S-ribosylhomocysteine lyase.